The following is a 90-amino-acid chain: Accessory gland-specific peptide 26Ab (90 aa).

The signal sequence occupies residues 1 to 21 (MNYFAVLCIFSCICLWQFSDA).

Main cells of the accessory glands of males.

It localises to the secreted. Its subcellular location is the extracellular space. In terms of biological role, this protein is transferred from male to female during mating and may affect egglaying and behavior after mating. The sequence is that of Accessory gland-specific peptide 26Ab (Acp26Ab) from Drosophila sechellia (Fruit fly).